We begin with the raw amino-acid sequence, 567 residues long: MESSKKMDAAGTLQPNPPLKLQPDRGAGSVLVPEQGGYKEKFVKTVEDKYKCEKCRLVLCNPKQTECGHRFCESCMAALLSSSSPKCTACQESIIKDKVFKDNCCKREILALQVYCRNEGRGCAEQLTLGHLLVHLKNECQFEELPCLRADCKEKVLRKDLRDHVEKACKYREATCSHCKSQVPMIKLQKHEDTDCPCVVVSCPHKCSVQTLLRSELSAHLSECVNAPSTCSFKRYGCVFQGTNQQIKAHEASSAVQHVNLLKEWSNSLEKKVSLLQNESVEKNKSIQSLHNQICSFEIEIERQKEMLRNNESKILHLQRVIDSQAEKLKELDKEIRPFRQNWEEADSMKSSVESLQNRVTELESVDKSAGQAARNTGLLESQLSRHDQMLSVHDIRLADMDLRFQVLETASYNGVLIWKIRDYKRRKQEAVMGKTLSLYSQPFYTGYFGYKMCARVYLNGDGMGKGTHLSLFFVIMRGEYDALLPWPFKQKVTLMLMDQGSSRRHLGDAFKPDPNSSSFKKPTGEMNIASGCPVFVAQTVLENGTYIKDDTIFIKVIVDTSDLPDP.

The disordered stretch occupies residues Met-1 to Gly-26. A Glycyl cysteine thioester (Cys-Gly) (interchain with G-Cter in ubiquitin) cross-link involves residue Cys-55. An RING-type zinc finger spans residues Cys-67 to Met-76. A Glycyl lysine isopeptide (Lys-Gly) (interchain with G-Cter in ubiquitin) cross-link involves residue Lys-106. A Glycyl cysteine thioester (Cys-Gly) (interchain with G-Cter in ubiquitin) cross-link involves residue Cys-123. 2 consecutive TRAF-type zinc fingers follow at residues Val-134–Gln-189 and Lys-190–Lys-248. Residues Lys-155 and Lys-167 each participate in a glycyl lysine isopeptide (Lys-Gly) (interchain with G-Cter in ubiquitin) cross-link. Positions Ser-266–Arg-337 form a coiled coil. Lys-328 is covalently cross-linked (Glycyl lysine isopeptide (Lys-Gly) (interchain with G-Cter in ubiquitin)). Residues Asn-414 to Val-559 enclose the MATH domain.

Belongs to the TNF receptor-associated factor family. A subfamily. In terms of assembly, homotrimer. Heterotrimer with TRAF2 and TRAF5. Interacts with LTBR/TNFRSF3, TNFRSF4, TNFRSF5/CD40, TNFRSF8/CD30, TNFRSF13C TNFRSF17/BCMA, TLR4 and EDAR. Interacts with MAP3K5, MAP3K14, TRAIP/TRIP, TDP2/TTRAP, TANK/ITRAF and TRAF3IP1. Interaction with TNFRSF5/CD40 is modulated by TANK/ITRAF, which competes for the same binding site. Interacts with TICAM1. Interacts with TRAFD1. Interacts with OTUB1, OTUB2 and OTUD5. Interacts with RNF216, OPTN and TBK1. Identified in a complex with TRAF2, MAP3K14 and BIRC3. Upon exposure to bacterial lipopolysaccharide (LPS), recruited to a transient complex containing TLR4, TRAF3, TRAF6, IKBKG, MAP3K7, MYD88, TICAM1, BIRC2, BIRC3 and UBE2N. Interacts (via RING-type zinc finger domain) with SRC. Interacts with CARD14. Interacts (via MATH domain) with PTPN22; the interaction promotes TRAF3 polyubiquitination. Interacts with MAVS. Directly interacts with DDX3X; this interaction stimulates TRAF3 'Lys-63' ubiquitination. Interacts with IRF3. Interacts with IKBKE in the course of viral infection. Interacts with TRIM35. Interacts with GAPDH; promoting TRAF3 ubiquitination. Interacts with PPP3CA and PPP3CB. Interacts with RALGDS. Interacts with FBXO11. In terms of processing, undergoes 'Lys-48'-linked polyubiquitination, leading to its proteasomal degradation in response to signaling by TNFSF13B, TLR4 or through CD40. 'Lys-48'-linked polyubiquitinated form is deubiquitinated by OTUD7B, preventing TRAF3 proteolysis and over-activation of non-canonical NF-kappa-B. Undergoes 'Lys-63'-linked ubiquitination during early stages of virus infection, and 'Lys-48'-linked ubiquitination during later stages. Undergoes both 'Lys-48'-linked and 'Lys-63'-linked ubiquitination in response to TLR3 and TLR4 signaling. 'Lys-63'-linked ubiquitination can be mediated by TRIM35. Deubiquitinated by OTUB1, OTUB2 and OTUD5. Undergoes 'Lys-63'-linked deubiquitination by MYSM1 to terminate the pattern-recognition receptors/PRRs pathways. Ubiquitinated at Lys-328 by the SCF(FBXL2) complex, leading to its degradation by the proteasome. Undergoes 'Lys-48'-linked polyubiquitination, leading to its proteasomal degradation in response to signaling by TNFSF13B, TLR4 or through CD40. 'Lys-48'-linked polyubiquitinated form is deubiquitinated by OTUD7B, preventing TRAF3 proteolysis and over-activation of non-canonical NF-kappa-B. Undergoes 'Lys-63'-linked ubiquitination during early stages of virus infection, and 'Lys-48'-linked ubiquitination during later stages. Undergoes both 'Lys-48'-linked and 'Lys-63'-linked ubiquitination in response to TLR3 and TLR4 signaling. 'Lys-63'-linked ubiquitination can be mediated by TRIM35. Deubiquitinated by OTUB1, OTUB2 and OTUD5. Undergoes 'Lys-63'-linked deubiquitination by MYSM1 to terminate the pattern-recognition receptors/PRRs pathways. Also undergoes 'Lys-29'-linked ubiquitination on Cys-55 and Cys-123 by NEDD4L; leading to increased 'Lys-48'- and 'Lys-63'-linked ubiquitination as well as increased binding to TBK1. TLR4 signals emanating from bacteria containing vesicles trigger 'Lys-33'-linked polyubiquitination that promotes the assembly of the exocyst complex thereby connecting innate immune signaling to the cellular trafficking apparatus. Deubiquitinated by USP25 during viral infection, leading to TRAF3 stabilization and type I interferon production. 'Lys-63'-linked ubiquitination by FBXO11 in a NEDD8-dependent manner promotes the amplification of IFN-I signaling. As to expression, detected in bone marrow macrophages and spleen B-cells (at protein level). In adult, highest in brain. Also found in kidney, heart, thymus, spleen, lung, muscle, testis and ovary. Not found in liver.

It is found in the cytoplasm. The protein resides in the endosome. Its subcellular location is the mitochondrion. The catalysed reaction is S-ubiquitinyl-[E2 ubiquitin-conjugating enzyme]-L-cysteine + [acceptor protein]-L-lysine = [E2 ubiquitin-conjugating enzyme]-L-cysteine + N(6)-ubiquitinyl-[acceptor protein]-L-lysine.. Functionally, cytoplasmic E3 ubiquitin ligase that regulates various signaling pathways, such as the NF-kappa-B, mitogen-activated protein kinase (MAPK) and interferon regulatory factor (IRF) pathways, and thus controls a lot of biological processes in both immune and non-immune cell types. In TLR and RLR signaling pathways, acts as an E3 ubiquitin ligase promoting the synthesis of 'Lys-63'-linked polyubiquitin chains on several substrates such as ASC that lead to the activation of the type I interferon response or the inflammasome. Following the activation of certain TLRs such as TLR4, acts as a negative NF-kappa-B regulator, possibly to avoid unregulated inflammatory response, and its degradation via 'Lys-48'-linked polyubiquitination is required for MAPK activation and production of inflammatory cytokines. Alternatively, when TLR4 orchestrates bacterial expulsion, TRAF3 undergoes 'Lys-33'-linked polyubiquitination and subsequently binds to RALGDS, mobilizing the exocyst complex to rapidly expel intracellular bacteria back for clearance. Also acts as a constitutive negative regulator of the alternative NF-kappa-B pathway, which controls B-cell survival and lymphoid organ development. Required for normal antibody isotype switching from IgM to IgG. Plays a role T-cell dependent immune responses. Down-regulates proteolytic processing of NFKB2, and thereby inhibits non-canonical activation of NF-kappa-B. Promotes ubiquitination and proteasomal degradation of MAP3K14. This is TNF receptor-associated factor 3 from Mus musculus (Mouse).